The sequence spans 766 residues: U3 small nucleolar RNA-associated protein 14 homolog C (766 aa).

Positions 14–42 (HQEELVDLPKNYPLSENEDEGDSDGERKH) are disordered. A phosphoserine mark is found at serine 28, serine 51, serine 76, and serine 80. Residue lysine 121 forms a Glycyl lysine isopeptide (Lys-Gly) (interchain with G-Cter in SUMO2) linkage. At threonine 204 the chain carries Phosphothreonine. 2 coiled-coil regions span residues 216–245 (LEEAKMHRAELQRARALQSYYEAKARKEKK) and 316–346 (LEARQAMQEQLAKNKELTQKLQVASESEEEE). Residues 365 to 563 (MNVDGPNPWM…EQLINLQNFL (199 aa)) are disordered. Positions 396-405 (ELAAHEVSAS) are enriched in low complexity. 2 positions are modified to phosphoserine: serine 403 and serine 405. Residues 407–434 (AEERPVAEEEILLREFEERQSLRKRSEL) show a composition bias toward basic and acidic residues. Serine 443 is subject to Phosphoserine. Lysine 447 is covalently cross-linked (Glycyl lysine isopeptide (Lys-Gly) (interchain with G-Cter in SUMO2)). Position 451 is a phosphoserine (serine 451). Residues 452–470 (QEVLSELRALSQKLKEKHQ) adopt a coiled-coil conformation. A compositionally biased stretch (basic residues) spans 466-475 (KEKHQSRKQK). Residues 502–527 (RSERVQTLEELEELGKEDCFQNKELP) show a composition bias toward basic and acidic residues. Lysine 517 participates in a covalent cross-link: Glycyl lysine isopeptide (Lys-Gly) (interchain with G-Cter in SUMO2). The span at 533-542 (GQQSERTPNN) shows a compositional bias: polar residues. Residues 545–555 (DAPKEKKEKEQ) are compositionally biased toward basic and acidic residues. Position 567 is a phosphoserine (serine 567). Lysine 732 participates in a covalent cross-link: Glycyl lysine isopeptide (Lys-Gly) (interchain with G-Cter in SUMO2). The tract at residues 734-766 (EDVGYQSSSRSDLPVIQRNPKRITTRHNKEEKL) is disordered.

Belongs to the UTP14 family. Expressed in testis.

The protein resides in the nucleus. It localises to the nucleolus. Functionally, essential for spermatogenesis. May be required specifically for ribosome biogenesis and hence protein synthesis during male meiosis. This chain is U3 small nucleolar RNA-associated protein 14 homolog C (UTP14C), found in Homo sapiens (Human).